A 61-amino-acid polypeptide reads, in one-letter code: MLQISNLLLAADFSAEVANNSAVGMIGSFIAAALLIVIPATAFLIFVSQKDSLDRTSTGRR.

The chain crosses the membrane as a helical span at residues 26–46 (IGSFIAAALLIVIPATAFLIF).

It belongs to the PsbX family. Type 2 subfamily. PSII consists of a core antenna complex that captures photons, and an electron transfer chain that converts photonic excitation into a charge separation. PSII forms dimeric complexes.

The protein resides in the cellular thylakoid membrane. Functionally, involved in the binding and/or turnover of quinones at the Q(B) site of Photosystem II. The sequence is that of Photosystem II reaction center X protein from Prochlorococcus marinus (strain MIT 9301).